A 267-amino-acid chain; its full sequence is Protein PERCC1 (267 aa).

3 disordered regions span residues 19 to 88 (HHPF…QLLR), 142 to 163 (SLED…RPGL), and 247 to 267 (ACPE…PAEA). A compositionally biased stretch (acidic residues) spans 28-50 (EPPETSEEEEEEEEEEEEEEGEG). Positions 74–83 (PEGPGSPETP) are enriched in low complexity.

Its function is as follows. Plays a critical role in intestinal function. Acts by promoting the development of enteroendocrine cells (EECs) of the gastrointestinal tract and pancreas. It is thereby required for normal enteroendocrine peptide hormone secretion. The chain is Protein PERCC1 from Homo sapiens (Human).